The sequence spans 225 residues: UPF0700 transmembrane protein RA0705 (225 aa).

6 consecutive transmembrane segments (helical) span residues Val17–Leu37, Gly66–Ile86, Ala95–Leu115, Phe117–Leu137, Ile168–Val188, and Leu194–Pro214.

The protein belongs to the UPF0700 family.

The protein resides in the cell membrane. The polypeptide is UPF0700 transmembrane protein RA0705 (Rhizobium meliloti (strain 1021) (Ensifer meliloti)).